The following is a 418-amino-acid chain: Isocitrate dehydrogenase [NADP] (418 aa).

T106 serves as a coordination point for NADP(+). Residues S115, N117, R121, R131, and R155 each contribute to the D-threo-isocitrate site. S115 bears the Phosphoserine mark. A Phosphothreonine modification is found at T193. Residue D309 coordinates Mg(2+). NADP(+)-binding positions include 341-347 (HGTAPKY), N354, Y393, and R397.

The protein belongs to the isocitrate and isopropylmalate dehydrogenases family. Homodimer. Requires Mg(2+) as cofactor. It depends on Mn(2+) as a cofactor.

The protein resides in the secreted. It carries out the reaction D-threo-isocitrate + NADP(+) = 2-oxoglutarate + CO2 + NADPH. In terms of biological role, catalyzes the oxidative decarboxylation of isocitrate to 2-oxoglutarate and carbon dioxide with the concomitant reduction of NADP(+). The sequence is that of Isocitrate dehydrogenase [NADP] (icd) from Pseudomonas aeruginosa (strain UCBPP-PA14).